The following is a 243-amino-acid chain: Probable transcriptional regulatory protein BAV2207 (243 aa).

Positions M1–R21 are disordered.

It belongs to the TACO1 family.

The protein resides in the cytoplasm. The sequence is that of Probable transcriptional regulatory protein BAV2207 from Bordetella avium (strain 197N).